The primary structure comprises 1308 residues: Transposon TX1 uncharacterized 149 kDa protein (1308 aa).

Residues 494–765 (EAFKKGELPL…KIIKYLGVYL (272 aa)) enclose the Reverse transcriptase domain.

The protein is Transposon TX1 uncharacterized 149 kDa protein of Xenopus laevis (African clawed frog).